The sequence spans 406 residues: Argininosuccinate synthase (406 aa).

ATP contacts are provided by residues 14 to 22 (AYSGGLDTS) and Ala-41. L-citrulline-binding residues include Tyr-92 and Ser-97. Gly-122 serves as a coordination point for ATP. L-aspartate-binding residues include Thr-124, Asn-128, and Asp-129. Residue Asn-128 participates in L-citrulline binding. 5 residues coordinate L-citrulline: Arg-132, Ser-181, Ser-190, Glu-266, and Tyr-278.

This sequence belongs to the argininosuccinate synthase family. Type 1 subfamily. As to quaternary structure, homotetramer.

It localises to the cytoplasm. It catalyses the reaction L-citrulline + L-aspartate + ATP = 2-(N(omega)-L-arginino)succinate + AMP + diphosphate + H(+). It functions in the pathway amino-acid biosynthesis; L-arginine biosynthesis; L-arginine from L-ornithine and carbamoyl phosphate: step 2/3. This Geobacter sulfurreducens (strain ATCC 51573 / DSM 12127 / PCA) protein is Argininosuccinate synthase.